Consider the following 474-residue polypeptide: UDP-N-acetylmuramate--L-alanine ligase (474 aa).

116–122 (GTHGKTT) contributes to the ATP binding site.

The protein belongs to the MurCDEF family.

Its subcellular location is the cytoplasm. It carries out the reaction UDP-N-acetyl-alpha-D-muramate + L-alanine + ATP = UDP-N-acetyl-alpha-D-muramoyl-L-alanine + ADP + phosphate + H(+). It participates in cell wall biogenesis; peptidoglycan biosynthesis. In terms of biological role, cell wall formation. The chain is UDP-N-acetylmuramate--L-alanine ligase from Hyphomonas neptunium (strain ATCC 15444).